The following is a 115-amino-acid chain: Methylmalonyl-CoA decarboxylase subunit delta (115 aa).

Residues 11 to 31 (WLIMAINMTVVFAVLIALGIL) traverse the membrane as a helical segment. Positions 46–70 (EAPAATAPVATPTATPVAPANASAQ) are disordered. Residues 48–65 (PAATAPVATPTATPVAPA) are compositionally biased toward low complexity.

This sequence belongs to the OadG family. The methylmalonyl-CoA decarboxylase is composed of five subunits: the carboxyltransferase alpha subunit (MmdA), the tunnel beta subunit (MmdB), the biotin-containing gamma subunit (MmdC), and the delta (MmdD) and epsilon (MmdE) subunits. The N-terminus is blocked.

The protein resides in the cell membrane. The catalysed reaction is (S)-methylmalonyl-CoA + Na(+)(in) + H(+)(out) = propanoyl-CoA + Na(+)(out) + CO2. With respect to regulation, completely inhibited by avidin. Subunit of the sodium ion pump methylmalonyl-CoA decarboxylase, which converts the chemical energy of a decarboxylation reaction into an electrochemical gradient of Na(+) ions across the cytoplasmic membrane, thereby creating a sodium ion motive force that is used for ATP synthesis. The delta subunit is required for catalytic activity as well as for the proper assembly of the individual subunits to an enzyme complex. Can also convert malonyl-CoA into acetyl-CoA. The protein is Methylmalonyl-CoA decarboxylase subunit delta of Veillonella parvula (Staphylococcus parvulus).